The sequence spans 163 residues: Nucleotide-binding protein Acel_0286 (163 aa).

Belongs to the YajQ family.

Nucleotide-binding protein. This is Nucleotide-binding protein Acel_0286 from Acidothermus cellulolyticus (strain ATCC 43068 / DSM 8971 / 11B).